A 951-amino-acid polypeptide reads, in one-letter code: Valine--tRNA ligase (951 aa).

Residues 40–50 carry the 'HIGH' region motif; it reads PNVTGSLHMGH. Residues 551–555 carry the 'KMSKS' region motif; that stretch reads KMSKS. Residue Lys-554 participates in ATP binding. Residues 879-950 adopt a coiled-coil conformation; it reads MAGLIDVEAE…LLEQKAKIES (72 aa).

This sequence belongs to the class-I aminoacyl-tRNA synthetase family. ValS type 1 subfamily. In terms of assembly, monomer.

Its subcellular location is the cytoplasm. The enzyme catalyses tRNA(Val) + L-valine + ATP = L-valyl-tRNA(Val) + AMP + diphosphate. Catalyzes the attachment of valine to tRNA(Val). As ValRS can inadvertently accommodate and process structurally similar amino acids such as threonine, to avoid such errors, it has a 'posttransfer' editing activity that hydrolyzes mischarged Thr-tRNA(Val) in a tRNA-dependent manner. The chain is Valine--tRNA ligase from Pseudoalteromonas translucida (strain TAC 125).